Reading from the N-terminus, the 236-residue chain is Endonuclease V (236 aa).

The Mg(2+) site is built by aspartate 47 and aspartate 115.

Belongs to the endonuclease V family. Requires Mg(2+) as cofactor.

It is found in the cytoplasm. The catalysed reaction is Endonucleolytic cleavage at apurinic or apyrimidinic sites to products with a 5'-phosphate.. Its function is as follows. DNA repair enzyme involved in the repair of deaminated bases. Selectively cleaves double-stranded DNA at the second phosphodiester bond 3' to a deoxyinosine leaving behind the intact lesion on the nicked DNA. In Xanthomonas campestris pv. campestris (strain 8004), this protein is Endonuclease V.